The sequence spans 119 residues: UPF0102 protein Nther_1376 (119 aa).

The protein belongs to the UPF0102 family.

This Natranaerobius thermophilus (strain ATCC BAA-1301 / DSM 18059 / JW/NM-WN-LF) protein is UPF0102 protein Nther_1376.